We begin with the raw amino-acid sequence, 359 residues long: sn-1 acyl-lipid omega-3 desaturase (ferredoxin) (359 aa).

A run of 2 helical transmembrane segments spans residues 44–64 (LGYF…AAYL) and 67–87 (WFFY…LFVV). Positions 89-93 (HDCGH) match the Histidine box-1 motif. Residues 125–129 (HRTHH) carry the Histidine box-2 motif. A run of 3 helical transmembrane segments spans residues 153-173 (AWYE…IYLF), 206-226 (LAAF…LFLL), and 228-248 (FYVA…FLHH). Positions 291 to 295 (HHIFS) match the Histidine box-3 motif.

It belongs to the fatty acid desaturase type 2 family. Fe(2+) is required as a cofactor.

Its subcellular location is the membrane. The enzyme catalyses a 1-[(9Z,12Z)-octadecdienoyl]-2-acyl-glycerolipid + 2 reduced [2Fe-2S]-[ferredoxin] + O2 + 2 H(+) = a 1-[(9Z,12Z,15Z)-octadectrienoyl]-2-acyl-glycerolipid + 2 oxidized [2Fe-2S]-[ferredoxin] + 2 H2O. It catalyses the reaction a 1-[(6Z,9Z,12Z)-octadectrienoyl]-2-acyl-glycerolipid + 2 reduced [2Fe-2S]-[ferredoxin] + O2 + 2 H(+) = a 1-[(6Z,9Z,12Z,15Z)-octadectetraenoyl]-2-acyl-glycerolipid + 2 oxidized [2Fe-2S]-[ferredoxin] + 2 H2O. Its pathway is lipid metabolism; polyunsaturated fatty acid biosynthesis. In terms of biological role, desaturase involved in fatty acid biosynthesis. Introduces a double bond at carbon 15 of linoleoyl and gamma-linolenoyl groups attached to the sn-1 position of the glycerol moiety of membrane glycerolipids. The sequence is that of sn-1 acyl-lipid omega-3 desaturase (ferredoxin) from Synechocystis sp. (strain ATCC 27184 / PCC 6803 / Kazusa).